We begin with the raw amino-acid sequence, 358 residues long: Glutamate 5-kinase (358 aa).

Lys-9 contributes to the ATP binding site. Positions 49, 136, and 148 each coordinate substrate. ATP is bound by residues 168–169 (TD) and 210–216 (TGGMTTK). The region spanning 275–353 (DAAVEVDAGA…RAEGVLIHRN (79 aa)) is the PUA domain.

The protein belongs to the glutamate 5-kinase family.

The protein localises to the cytoplasm. The enzyme catalyses L-glutamate + ATP = L-glutamyl 5-phosphate + ADP. The protein operates within amino-acid biosynthesis; L-proline biosynthesis; L-glutamate 5-semialdehyde from L-glutamate: step 1/2. In terms of biological role, catalyzes the transfer of a phosphate group to glutamate to form L-glutamate 5-phosphate. This Streptococcus suis (strain 05ZYH33) protein is Glutamate 5-kinase.